A 367-amino-acid chain; its full sequence is Polyenoic acids biosynthesis gene cluster protein Ba17b (367 aa).

The next 3 membrane-spanning stretches (helical) occupy residues 16-36, 50-70, and 90-110; these read LEVF…LRFY, WLII…IGAV, and LVAF…TEGL. Asn133 carries an N-linked (GlcNAc...) asparagine glycan. 3 helical membrane passes run 137–157, 183–203, and 211–231; these read LVLV…CTPF, FPNI…VWGL, and LVLV…GGDS. Asn245 carries an N-linked (GlcNAc...) asparagine glycan. The helical transmembrane segment at 259–279 threads the bilayer; the sequence is LIIWTVCEPGVYLIAACLLVY.

The protein belongs to the SAT4 family.

Its subcellular location is the membrane. It participates in secondary metabolite biosynthesis. Part of the gene cluster that mediates the biosynthesis of (2Z,4E,6E,10E)-9-hydroxydodeca-2,4,6,10-tetraenoic acid (BAA), (2E,4E,6E,10E)-9-hydroxydodeca-2,4,6,10-tetraenoic acid (BAB), and (2Z,4E,6E)-octa-2,4,6-trienedioic acid (PBA). The highly reducing polyketide synthase Ba17a is sufficent to produce PBA and BAA. The still to be characterized protein Ba17b leads to an increased production of BAA as well as to the production of the new compound BAB. BAA does not possess insecticidal activity against G.mellonella larvae, however, both BAA and BAB increase the growth of Candida albicans and BAA can mitigate the fungicidal effects of fluconazole over C.albicans, suggesting that generalist pathogens such as M.anisopliae, can potentially manipulate the yeast microbiota found in arthropods (and anywhere else) by the activity of compounds as BAA and BAB. The sequence is that of Polyenoic acids biosynthesis gene cluster protein Ba17b from Metarhizium anisopliae (Entomophthora anisopliae).